Here is a 38-residue protein sequence, read N- to C-terminus: MMMFITVYDINQKQKKRYGLRGCNLNLKATVLLLHKRI.

The protein belongs to the asfivirus C84L family.

This is an uncharacterized protein from Ornithodoros (relapsing fever ticks).